Here is a 420-residue protein sequence, read N- to C-terminus: ATP phosphoribosyltransferase regulatory subunit (420 aa).

The protein belongs to the class-II aminoacyl-tRNA synthetase family. HisZ subfamily. Heteromultimer composed of HisG and HisZ subunits.

The protein localises to the cytoplasm. It functions in the pathway amino-acid biosynthesis; L-histidine biosynthesis; L-histidine from 5-phospho-alpha-D-ribose 1-diphosphate: step 1/9. In terms of biological role, required for the first step of histidine biosynthesis. May allow the feedback regulation of ATP phosphoribosyltransferase activity by histidine. This is ATP phosphoribosyltransferase regulatory subunit from Bacillus thuringiensis subsp. konkukian (strain 97-27).